Here is a 352-residue protein sequence, read N- to C-terminus: RNA 3'-terminal phosphate cyclase (352 aa).

Residues Gln-100 and 297–301 (HLADQ) contribute to the ATP site. The Tele-AMP-histidine intermediate role is filled by His-322.

The protein belongs to the RNA 3'-terminal cyclase family. Type 1 subfamily.

The protein localises to the cytoplasm. The enzyme catalyses a 3'-end 3'-phospho-ribonucleotide-RNA + ATP = a 3'-end 2',3'-cyclophospho-ribonucleotide-RNA + AMP + diphosphate. In terms of biological role, catalyzes the conversion of 3'-phosphate to a 2',3'-cyclic phosphodiester at the end of RNA. The mechanism of action of the enzyme occurs in 3 steps: (A) adenylation of the enzyme by ATP; (B) transfer of adenylate to an RNA-N3'P to produce RNA-N3'PP5'A; (C) and attack of the adjacent 2'-hydroxyl on the 3'-phosphorus in the diester linkage to produce the cyclic end product. The biological role of this enzyme is unknown but it is likely to function in some aspects of cellular RNA processing. In Methanosarcina mazei (strain ATCC BAA-159 / DSM 3647 / Goe1 / Go1 / JCM 11833 / OCM 88) (Methanosarcina frisia), this protein is RNA 3'-terminal phosphate cyclase.